A 598-amino-acid polypeptide reads, in one-letter code: Elongation factor 4 (598 aa).

One can recognise a tr-type G domain in the interval 2-184; the sequence is QHIRNFSIIA…TVVRRVPPPK (183 aa). GTP-binding positions include 14–19 and 131–134; these read DHGKST and NKID.

This sequence belongs to the TRAFAC class translation factor GTPase superfamily. Classic translation factor GTPase family. LepA subfamily.

The protein resides in the cell inner membrane. The enzyme catalyses GTP + H2O = GDP + phosphate + H(+). Required for accurate and efficient protein synthesis under certain stress conditions. May act as a fidelity factor of the translation reaction, by catalyzing a one-codon backward translocation of tRNAs on improperly translocated ribosomes. Back-translocation proceeds from a post-translocation (POST) complex to a pre-translocation (PRE) complex, thus giving elongation factor G a second chance to translocate the tRNAs correctly. Binds to ribosomes in a GTP-dependent manner. In Aromatoleum aromaticum (strain DSM 19018 / LMG 30748 / EbN1) (Azoarcus sp. (strain EbN1)), this protein is Elongation factor 4.